The primary structure comprises 169 residues: Disulfide bond formation protein B 1 (169 aa).

The Cytoplasmic segment spans residues 1–14 (MSDNTLYLRREKRF). The helical transmembrane segment at 15-31 (LVLLGIICLALIGGALY) threads the bilayer. Over 32–49 (MQIVLGEAPCPLCILQRY) the chain is Periplasmic. Cysteines 41 and 44 form a disulfide. The helical transmembrane segment at 50–64 (ALLFIAIFAFIGAAM) threads the bilayer. At 65-71 (SGRRGVT) the chain is on the cytoplasmic side. A helical membrane pass occupies residues 72–89 (VCETLVTLSALGGIAAAG). The Periplasmic segment spans residues 90-144 (RHVWILAHPSDSCGIDVLQPIVDGLPLATLFPTGFQVSGFCTTPYPPVLGLSLAQ). A disulfide bridge links C102 with C130. The chain crosses the membrane as a helical span at residues 145–163 (WALAAFVLTAVLVPACIIR). The Cytoplasmic segment spans residues 164–169 (NRRKPY).

Belongs to the DsbB family.

It is found in the cell inner membrane. Functionally, required for disulfide bond formation in some periplasmic proteins. Acts by oxidizing the DsbA protein. This chain is Disulfide bond formation protein B 1, found in Pseudomonas savastanoi pv. phaseolicola (strain 1448A / Race 6) (Pseudomonas syringae pv. phaseolicola (strain 1448A / Race 6)).